A 1166-amino-acid chain; its full sequence is Folliculin-interacting protein 1 (1166 aa).

The 442-residue stretch at 37 to 478 (FDPSQIRLIV…TVMPNGQPPI (442 aa)) folds into the uDENN FNIP1/2-type domain. A phosphoserine; by AMPK mark is found at Ser220, Ser230, Ser232, and Ser261. Position 294 is a phosphothreonine (Thr294). The residue at position 296 (Ser296) is a Phosphoserine. Residues 486-1092 (SSQSVDMLAK…VSNLLHSTLQ (607 aa)) form the cDENN FNIP1/2-type domain. Ser593 bears the Phosphoserine; by AMPK mark. At Ser594 the chain carries Phosphoserine. Zn(2+) is bound by residues Cys608 and Cys610. The Cys degron signature appears at 608 to 615 (CNCKYCSH). Positions 611-612 (KY) are KY-finger. Positions 613 and 615 each coordinate Zn(2+). Ser760 and Ser763 each carry phosphoserine. Disordered regions lie at residues 781–817 (TKPL…VSEE) and 912–956 (LVPH…HDMT). Composition is skewed to basic and acidic residues over residues 783-805 (PLKE…KDQS) and 915-925 (HGDKESSDKKI). The interval 929–1166 (TEWDIPRNES…HSPYVAQILL (238 aa)) is interaction with HSP90AA1. At Ser938 the chain carries Phosphoserine; alternate; by CK2. The O-linked (GlcNAc) serine; alternate glycan is linked to Ser938. A phosphoserine; by CK2 mark is found at Ser939, Ser941, Ser946, and Ser948. The dDENN FNIP1/2-type domain occupies 1102–1157 (FCVMHLEDRLQELYFKSKMLSEYLRGQMRVHVKELGVVLGIESSDLPLLAAVASTH). Lys1119 participates in a covalent cross-link: Glycyl lysine isopeptide (Lys-Gly) (interchain with G-Cter in ubiquitin).

This sequence belongs to the FNIP family. In terms of assembly, homodimer and homomultimer. Heterodimer and heteromultimer with FNIP2. Interacts with FLCN (via C-terminus). Component of the lysosomal folliculin complex (LFC), composed of FLCN, FNIP1 (or FNIP2), RagA/RRAGA or RagB/RRAGB GDP-bound, RagC/RRAGC or RagD/RRAGD GTP-bound, and Ragulator. Interacts with HSPCA and with the PRKAA1, PRKAB1 and PRKAG1 subunits of 5'-AMP-activated protein kinase (AMPK). Phosphorylated FLCN and AMPK are preferentially bound. Interacts with HSP70, STIP1, PTGES3, CDC37, BRAF, GCR and CDK4. Interacts with HSP90AA1; the interaction inhibits HSP90AA1 ATPase activity. Interacts with ATP2A2. Phosphorylated by AMPK in response to energetic stress. Phosphorylation by AMPK in response to mitochondrial damage promotes inactivation of the non-canonical mTORC1 signaling, nuclear translocation of TFEB and TFE3, inducing transcription of lysosomal or autophagy genes. Sequential phosphorylation by CK2 promotes its gradual interaction with HSP90AA1/Hsp90. Priming phosphorylation at Ser-938 is followed by relay phosphorylation at Ser-939, Ser-941, Ser-946 and Ser-948, promoting its gradual interaction with HSP90AA1/Hsp90. This leads to incremental inhibition of HSP90AA1/Hsp90 ATPase activity and gradual activation of both kinase and non-kinase clients. Dephosphorylated by protein phosphatase 5 (PP5), promoting glycosylation by OGT. In terms of processing, glcNAcylation at Ser-938 by OGT following dephosphorylation by protein phosphatase 5 (PP5) promotes ubiquitination and degradation by the proteasome. Post-translationally, ubiquitinated through 'Lys-11' linkage of ubiquitin moieties at Lys-1119 following glycosylation by OGT, leading to its degradation by the proteasome. Ubiquitinated by the CRL2(FEM1B) complex in response to reductive stress: reductive stress causes reduction of the conserved Cys degron in FNIP1, followed by zinc-binding, zinc acting as a molecular glue for recognition by the CRL2(FEM1B) complex. Ubiquitination leads to FNIP1 degradation, and activation of mitochondria to recalibrate reactive oxygen species (ROS). Oxidation of the Cys degron in normal conditions promotes its stabilization by preventing recognition and ubiquitination by the CRL2(FEM1B) complex. Strong expression is found in the heart, liver placenta, muscle, nasal mucosa, salivary gland and uvula and moderate expression in kidney and lung. Higher levels detected in clear cell renal cell carcinoma (RCC) and chromophobe RCC than in normal kidney tissue. Expressed in peripheral blood mononuclear cells.

It is found in the lysosome membrane. The protein resides in the cytoplasm. The protein localises to the cytosol. Binding partner of the GTPase-activating protein FLCN: involved in the cellular response to amino acid availability by regulating the non-canonical mTORC1 signaling cascade controlling the MiT/TFE factors TFEB and TFE3. Required to promote FLCN recruitment to lysosomes and interaction with Rag GTPases, leading to activation of the non-canonical mTORC1 signaling. In low-amino acid conditions, component of the lysosomal folliculin complex (LFC) on the membrane of lysosomes, which inhibits the GTPase-activating activity of FLCN, thereby inactivating mTORC1 and promoting nuclear translocation of TFEB and TFE3. Upon amino acid restimulation, disassembly of the LFC complex liberates the GTPase-activating activity of FLCN, leading to activation of mTORC1 and subsequent inactivation of TFEB and TFE3. Together with FLCN, regulates autophagy: following phosphorylation by ULK1, interacts with GABARAP and promotes autophagy. In addition to its role in mTORC1 signaling, also acts as a co-chaperone of HSP90AA1/Hsp90: following gradual phosphorylation by CK2, inhibits the ATPase activity of HSP90AA1/Hsp90, leading to activate both kinase and non-kinase client proteins of HSP90AA1/Hsp90. Acts as a scaffold to load client protein FLCN onto HSP90AA1/Hsp90. Competes with the activating co-chaperone AHSA1 for binding to HSP90AA1, thereby providing a reciprocal regulatory mechanism for chaperoning of client proteins. Also acts as a core component of the reductive stress response by inhibiting activation of mitochondria in normal conditions: in response to reductive stress, the conserved Cys degron is reduced, leading to recognition and polyubiquitylation by the CRL2(FEM1B) complex, followed by proteasomal. Required for B-cell development. In Homo sapiens (Human), this protein is Folliculin-interacting protein 1.